Reading from the N-terminus, the 212-residue chain is Stem bromelain (212 aa).

2 cysteine pairs are disulfide-bonded: Cys23-Cys63 and Cys57-Cys96. Residue Cys26 is part of the active site. Asn117 carries an N-linked (GlcNAc...) asparagine glycan. Residues Cys152 and Cys199 are joined by a disulfide bond. His158 is a catalytic residue.

This sequence belongs to the peptidase C1 family.

It catalyses the reaction Broad specificity for cleavage of proteins, but strong preference for Z-Arg-Arg-|-NHMec among small molecule substrates.. Its function is as follows. Cysteine proteinase with a high level of diversity in substrate specificity. This is Stem bromelain from Ananas comosus (Pineapple).